A 186-amino-acid chain; its full sequence is Pyridoxal 5'-phosphate synthase subunit PdxT (186 aa).

46–48 (GES) contacts L-glutamine. The active-site Nucleophile is the Cys75. L-glutamine contacts are provided by residues Arg101 and 127 to 128 (IR). Active-site charge relay system residues include His164 and Glu166.

It belongs to the glutaminase PdxT/SNO family. In terms of assembly, in the presence of PdxS, forms a dodecamer of heterodimers. Only shows activity in the heterodimer.

It catalyses the reaction aldehydo-D-ribose 5-phosphate + D-glyceraldehyde 3-phosphate + L-glutamine = pyridoxal 5'-phosphate + L-glutamate + phosphate + 3 H2O + H(+). The catalysed reaction is L-glutamine + H2O = L-glutamate + NH4(+). It functions in the pathway cofactor biosynthesis; pyridoxal 5'-phosphate biosynthesis. In terms of biological role, catalyzes the hydrolysis of glutamine to glutamate and ammonia as part of the biosynthesis of pyridoxal 5'-phosphate. The resulting ammonia molecule is channeled to the active site of PdxS. The sequence is that of Pyridoxal 5'-phosphate synthase subunit PdxT from Methanococcus aeolicus (strain ATCC BAA-1280 / DSM 17508 / OCM 812 / Nankai-3).